The chain runs to 670 residues: DNA mismatch repair protein MutL (670 aa).

Positions 363-451 (SFDRGRPLSR…RAAGGPASTH (89 aa)) are disordered. Residues 379-389 (ERWRERHRPDA) are compositionally biased toward basic and acidic residues.

Belongs to the DNA mismatch repair MutL/HexB family.

Its function is as follows. This protein is involved in the repair of mismatches in DNA. It is required for dam-dependent methyl-directed DNA mismatch repair. May act as a 'molecular matchmaker', a protein that promotes the formation of a stable complex between two or more DNA-binding proteins in an ATP-dependent manner without itself being part of a final effector complex. The chain is DNA mismatch repair protein MutL from Syntrophobacter fumaroxidans (strain DSM 10017 / MPOB).